A 145-amino-acid polypeptide reads, in one-letter code: Deoxyuridine 5'-triphosphate nucleotidohydrolase (145 aa).

Substrate is bound by residues 63–65, Gln76, and 80–82; these read RSG and TVD.

The protein belongs to the dUTPase family. It depends on Mg(2+) as a cofactor.

The enzyme catalyses dUTP + H2O = dUMP + diphosphate + H(+). Its pathway is pyrimidine metabolism; dUMP biosynthesis; dUMP from dCTP (dUTP route): step 2/2. In terms of biological role, this enzyme is involved in nucleotide metabolism: it produces dUMP, the immediate precursor of thymidine nucleotides and it decreases the intracellular concentration of dUTP so that uracil cannot be incorporated into DNA. This is Deoxyuridine 5'-triphosphate nucleotidohydrolase from Chlamydia trachomatis serovar L2 (strain ATCC VR-902B / DSM 19102 / 434/Bu).